We begin with the raw amino-acid sequence, 1000 residues long: DENN domain-containing protein 2A (1000 aa).

4 disordered regions span residues 1-155 (MLEA…LRFQ), 174-328 (DGSA…RKSY), 427-464 (KLLD…LGDL), and 491-525 (KRVK…LKAH). A compositionally biased stretch (polar residues) spans 34–43 (QLNSVPNSGP). Basic and acidic residues-rich tracts occupy residues 56–70 (IKDK…KEPP), 79–117 (DGQE…DSRA), 140–155 (SQHR…LRFQ), and 221–237 (HLEV…DWKG). 2 stretches are compositionally biased toward pro residues: residues 249–258 (PPKPFINPVP) and 288–307 (PPLP…PPPT). Over residues 427–436 (KLLDTRKLSR) the composition is skewed to basic and acidic residues. The segment covering 496–506 (LSQSTESNSGK) has biased composition (polar residues). Ser-544 is modified (phosphoserine). The region spanning 559-708 (EYFVVVSLHK…PFPALGKTII (150 aa)) is the uDENN domain. The cDENN domain occupies 730–863 (RLEHVDFESL…LQVALEHILE (134 aa)). A dDENN domain is found at 865–960 (RNDLACDQDG…QERELRRQDA (96 aa)).

The protein localises to the cytoplasm. Its subcellular location is the cytoskeleton. Functionally, guanine nucleotide exchange factor (GEF) which may activate RAB9A and RAB9B. Promotes the exchange of GDP to GTP, converting inactive GDP-bound Rab proteins into their active GTP-bound form. May play a role in late endosomes back to trans-Golgi network/TGN transport. The polypeptide is DENN domain-containing protein 2A (Dennd2a) (Mus musculus (Mouse)).